A 1174-amino-acid polypeptide reads, in one-letter code: RecBCD enzyme subunit RecB (1174 aa).

A DNA-binding and helicase activity, interacts with RecC region spans residues 1 to 852 (MKIDSLKEKL…GGKTMNYEGL (852 aa)). A UvrD-like helicase ATP-binding domain is found at 4 to 449 (DSLKEKLNIF…YYLDTNWRSS (446 aa)). 25-32 (ASAGTGKT) provides a ligand contact to ATP. A UvrD-like helicase C-terminal domain is found at 479-745 (PSSKNLKMNF…KIITIHKSKG (267 aa)). A nuclease activity, interacts with RecD and RecA region spans residues 900 to 1174 (TWSITSFSQL…LIKKTMTLIS (275 aa)). The Mg(2+) site is built by H957, D1068, and D1081. The active-site For nuclease activity is D1081.

It belongs to the helicase family. UvrD subfamily. Heterotrimer of RecB, RecC and RecD. All subunits contribute to DNA-binding. Interacts with RecA. Requires Mg(2+) as cofactor.

The catalysed reaction is Exonucleolytic cleavage (in the presence of ATP) in either 5'- to 3'- or 3'- to 5'-direction to yield 5'-phosphooligonucleotides.. It carries out the reaction Couples ATP hydrolysis with the unwinding of duplex DNA by translocating in the 3'-5' direction.. It catalyses the reaction ATP + H2O = ADP + phosphate + H(+). In terms of biological role, a helicase/nuclease that prepares dsDNA breaks (DSB) for recombinational DNA repair. Binds to DSBs and unwinds DNA via a highly rapid and processive ATP-dependent bidirectional helicase activity. Unwinds dsDNA until it encounters a Chi (crossover hotspot instigator) sequence from the 3' direction. Cuts ssDNA a few nucleotides 3' to the Chi site. The properties and activities of the enzyme are changed at Chi. The Chi-altered holoenzyme produces a long 3'-ssDNA overhang and facilitates RecA-binding to the ssDNA for homologous DNA recombination and repair. Holoenzyme degrades any linearized DNA that is unable to undergo homologous recombination. In the holoenzyme this subunit contributes ATPase, 3'-5' helicase, exonuclease activity and loads RecA onto ssDNA. This Buchnera aphidicola subsp. Acyrthosiphon pisum (strain APS) (Acyrthosiphon pisum symbiotic bacterium) protein is RecBCD enzyme subunit RecB.